The primary structure comprises 312 residues: Transcription factor SOX-3 (312 aa).

The segment at 1-23 is disordered; that stretch reads MYSMLETEIKTPQPTRAARGEPA. A DNA-binding region (HMG box) is located at residues 46–114; the sequence is VKRPMNAFMV…VHMKEYPDYK (69 aa). The tract at residues 229–254 is disordered; it reads STAMSLGSMGSVVKSEPSSAPPAITS. Residues 263-274 carry the 9aaTAD motif; sequence ELRDMISMYLGP.

In terms of tissue distribution, first expressed in the embryonic neural plate shortly before closure and expression continues in the neural tube. From stage 16 onwards, expressed throughout the CNS including the brain, with expression predominant in the undifferentiated cells of the neural epithelium. Also expressed at a low level in the retina and the gut epithelium.

The protein resides in the nucleus. In terms of biological role, transcription factor that may function as a switch in neuronal development. Keeps neural cells undifferentiated by counteracting the activity of proneural proteins and suppresses neuronal differentiation. The chain is Transcription factor SOX-3 (SOX3) from Gallus gallus (Chicken).